A 328-amino-acid polypeptide reads, in one-letter code: 17-beta-hydroxysteroid dehydrogenase type 1 (328 aa).

NADP(+) contacts are provided by residues 10–38 (GCSS…ATLR) and Asp-66. At Ser-135 the chain carries Phosphoserine; by PKA. Position 143 (Ser-143) interacts with substrate. The active-site Proton acceptor is the Tyr-156. Residue Lys-160 participates in NADP(+) binding. A disordered region spans residues 291–328 (KAEAGAEAGGGAGPGAEDEAGRGAVGDPELGDPPAAPQ).

It belongs to the short-chain dehydrogenases/reductases (SDR) family. Homodimer. Exists predominantly as a homodimer but also exits as monomer.

It is found in the cytoplasm. It carries out the reaction 17beta-estradiol + NAD(+) = estrone + NADH + H(+). The catalysed reaction is 17beta-estradiol + NADP(+) = estrone + NADPH + H(+). The enzyme catalyses testosterone + NADP(+) = androst-4-ene-3,17-dione + NADPH + H(+). It participates in steroid biosynthesis; estrogen biosynthesis. Favors the reduction of estrogens and androgens. Converts estrone (E1) to a more potent estrogen, 17beta-estradiol (E2). Also has 20-alpha-HSD activity. Uses preferentially NADH. The chain is 17-beta-hydroxysteroid dehydrogenase type 1 from Homo sapiens (Human).